A 225-amino-acid chain; its full sequence is Sodium-dependent neutral amino acid transporter SLC6A17 (225 aa).

The next 3 helical transmembrane spans lie at 1–8, 16–35, and 60–80; these read NVWRFPYL, AYLV…LFFL, and GIGF…NVII. At 81-143 the chain is on the extracellular side; the sequence is GWSIFYFFKS…NSISESGGLN (63 aa). An N-linked (GlcNAc...) asparagine glycan is attached at asparagine 105. 3 helical membrane-spanning segments follow: residues 144–162, 171–188, and 224–225; these read WKMT…MAVV, VMYF…CFLV, and IF.

This sequence belongs to the sodium:neurotransmitter symporter (SNF) (TC 2.A.22) family.

Its subcellular location is the cytoplasmic vesicle. The protein resides in the secretory vesicle. It localises to the synaptic vesicle membrane. It is found in the postsynapse. The protein localises to the presynapse. It catalyses the reaction L-proline(in) + Na(+)(in) = L-proline(out) + Na(+)(out). It carries out the reaction L-leucine(in) + Na(+)(in) = L-leucine(out) + Na(+)(out). The enzyme catalyses glycine(in) + Na(+)(in) = glycine(out) + Na(+)(out). The catalysed reaction is L-alanine(in) + Na(+)(in) = L-alanine(out) + Na(+)(out). It catalyses the reaction L-glutamine(in) + Na(+)(in) = L-glutamine(out) + Na(+)(out). Synaptic vesicle transporter with apparent selectivity for neutral amino acids. The transport is sodium-coupled but chloride-independent, likely driven by the proton electrochemical gradient generated by vacuolar H(+)-ATPase in an overall electrogenic mechanism. May contribute to the synaptic uptake of neurotransmitter precursors in a process coupled in part to vesicle exocytosis. The protein is Sodium-dependent neutral amino acid transporter SLC6A17 of Bos taurus (Bovine).